The following is a 130-amino-acid chain: Holo-[acyl-carrier-protein] synthase (130 aa).

Mg(2+) is bound by residues Asp8 and Glu62.

It belongs to the P-Pant transferase superfamily. AcpS family. It depends on Mg(2+) as a cofactor.

Its subcellular location is the cytoplasm. The catalysed reaction is apo-[ACP] + CoA = holo-[ACP] + adenosine 3',5'-bisphosphate + H(+). In terms of biological role, transfers the 4'-phosphopantetheine moiety from coenzyme A to a Ser of acyl-carrier-protein. This is Holo-[acyl-carrier-protein] synthase from Acidovorax ebreus (strain TPSY) (Diaphorobacter sp. (strain TPSY)).